Reading from the N-terminus, the 316-residue chain is MEKFELHILGCGSALPTTRHFATSQVVNLREKLFMIDCGEGAQMQLRRSRLKFSRLNHIFISHLHGDHCFGLLGLISTFGLLGRTADLHIHSPKGLEELFAPLLSFFCKTLAYKVFFHEFETKEPTLIYDDRSVAVTTIPLRHRIPCCGFLFEEKQRPNHIIRDMVDFYKVPVYELNRIKNGADFVTPEGEVIPNHRLTRPSAPARKYAYCSDTIYRPEIVEQIKGIDLLFHEATFAQTEQVRAKETHHTTAAQAAQIALNAEVKQLVIGHFSARYEDESVLLNEAAAIFPQTVLARENMCITINNYTDTRDYDPL.

The Zn(2+) site is built by His-63, His-65, Asp-67, His-68, His-143, Asp-213, and His-271. Catalysis depends on Asp-67, which acts as the Proton acceptor.

The protein belongs to the RNase Z family. Homodimer. The cofactor is Zn(2+).

The catalysed reaction is Endonucleolytic cleavage of RNA, removing extra 3' nucleotides from tRNA precursor, generating 3' termini of tRNAs. A 3'-hydroxy group is left at the tRNA terminus and a 5'-phosphoryl group is left at the trailer molecule.. Functionally, zinc phosphodiesterase, which displays some tRNA 3'-processing endonuclease activity. Probably involved in tRNA maturation, by removing a 3'-trailer from precursor tRNA. This is Ribonuclease Z from Bacteroides thetaiotaomicron (strain ATCC 29148 / DSM 2079 / JCM 5827 / CCUG 10774 / NCTC 10582 / VPI-5482 / E50).